The sequence spans 609 residues: UvrABC system protein C (609 aa).

One can recognise a GIY-YIG domain in the interval 16 to 94; that stretch reads SSAGVYRMYD…IKQYMPKYNV (79 aa). One can recognise a UVR domain in the interval 203 to 238; that stretch reads KQVISELVAKMEEAAGQQAYEQAARFRDQIMALRRV.

It belongs to the UvrC family. Interacts with UvrB in an incision complex.

Its subcellular location is the cytoplasm. In terms of biological role, the UvrABC repair system catalyzes the recognition and processing of DNA lesions. UvrC both incises the 5' and 3' sides of the lesion. The N-terminal half is responsible for the 3' incision and the C-terminal half is responsible for the 5' incision. This Shewanella sp. (strain ANA-3) protein is UvrABC system protein C.